Reading from the N-terminus, the 164-residue chain is Large ribosomal subunit protein uL15 (164 aa).

Residues 1–33 show a composition bias toward basic residues; that stretch reads MTSKKRRQRGSRTHGGGTHKNRRGAGHRGGRGR. 2 disordered regions span residues 1 to 59 and 137 to 164; these read MTSK…PGAE and AGGS…NDEN. Positions 34 to 43 are enriched in basic and acidic residues; it reads AGRDKHEQHN. Over residues 153–164 the composition is skewed to acidic residues; that stretch reads GEDEEPNSNDEN.

This sequence belongs to the universal ribosomal protein uL15 family. Part of the 50S ribosomal subunit.

Functionally, binds to the 23S rRNA. This chain is Large ribosomal subunit protein uL15, found in Haloquadratum walsbyi (strain DSM 16790 / HBSQ001).